A 257-amino-acid chain; its full sequence is Phosphatidylglycerol--prolipoprotein diacylglyceryl transferase (257 aa).

A run of 4 helical transmembrane segments spans residues 12-32 (FSIR…VYLA), 49-69 (FILM…VIFE), 83-103 (IWNG…LLVI), and 109-129 (LINP…AQAI). Arg131 is a binding site for a 1,2-diacyl-sn-glycero-3-phospho-(1'-sn-glycerol). Transmembrane regions (helical) follow at residues 167 to 187 (VPTF…IMSI), 197 to 217 (GEVA…IEGM), and 226 to 246 (GLRV…VMII).

The protein belongs to the Lgt family.

The protein localises to the cell membrane. It catalyses the reaction L-cysteinyl-[prolipoprotein] + a 1,2-diacyl-sn-glycero-3-phospho-(1'-sn-glycerol) = an S-1,2-diacyl-sn-glyceryl-L-cysteinyl-[prolipoprotein] + sn-glycerol 1-phosphate + H(+). It functions in the pathway protein modification; lipoprotein biosynthesis (diacylglyceryl transfer). Its function is as follows. Catalyzes the transfer of the diacylglyceryl group from phosphatidylglycerol to the sulfhydryl group of the N-terminal cysteine of a prolipoprotein, the first step in the formation of mature lipoproteins. The sequence is that of Phosphatidylglycerol--prolipoprotein diacylglyceryl transferase from Streptococcus agalactiae serotype Ia (strain ATCC 27591 / A909 / CDC SS700).